We begin with the raw amino-acid sequence, 96 residues long: Co-chaperonin GroES (96 aa).

It belongs to the GroES chaperonin family. Heptamer of 7 subunits arranged in a ring. Interacts with the chaperonin GroEL.

Its subcellular location is the cytoplasm. Together with the chaperonin GroEL, plays an essential role in assisting protein folding. The GroEL-GroES system forms a nano-cage that allows encapsulation of the non-native substrate proteins and provides a physical environment optimized to promote and accelerate protein folding. GroES binds to the apical surface of the GroEL ring, thereby capping the opening of the GroEL channel. In Idiomarina loihiensis (strain ATCC BAA-735 / DSM 15497 / L2-TR), this protein is Co-chaperonin GroES.